The primary structure comprises 479 residues: MSEFAIRNMDQVAPVSNMYRGMLKRQPAFDTFDSSNSLFAGYFLSLNEDQTLQEVPTGFDSTSYESNNCELPLLTPCSKAVMSQALKDTFSGFTKEQCRLGIPNNPWLWTEQHVCQWLAWATNEFSLANVNIHQFLMSGQDLCNLGKERFLELAPDYVGDILWEHLEQMIKDSQEKTQDQYVESSHLTSVPHWVNNNSLTVNVDQTPYGIQMPGYPKALSYPKPNLLSDICQTSTGPNLLSPEQDFSLFPKTQVDAVSVNYCTVNQDFTRSNLNLLIDNSGKLREHESSESGAESYESSDSMLQSWNSQSSLVDLQRVPSYESFEDDCSQSLCMSKPTMSFKDYIQDRSDPVEQGKPVIPAAILAGFTGSGPIQLWQFLLELLTDKSCQSFISWTGDGWEFKLADPDEVARRWGRRKNKPKMNYEKLSRGLRYYYDKNIIHKTSGKRYVYRFVCDLQNLLGYTAEELHAMLGVQPDTED.

The 86-residue stretch at 88-173 folds into the PNT domain; it reads DTFSGFTKEQ…EHLEQMIKDS (86 aa). The ETS DNA-binding region spans 373-453; sequence IQLWQFLLEL…SGKRYVYRFV (81 aa).

The protein belongs to the ETS family.

Its subcellular location is the nucleus. In terms of biological role, probable transcription factor. The sequence is that of Protein C-ets-2 (ETS2) from Gallus gallus (Chicken).